We begin with the raw amino-acid sequence, 618 residues long: Glucose starvation modulator protein 1 (618 aa).

The segment at residues 20-48 (CEFCHTKHIQCDVGRPCQNCLKRNIGKFC) is a DNA-binding region (zn(2)-C6 fungal-type). The segment at 325-353 (ANANTQPSHNAKLESECDSSSHSDADLEK) is disordered. Positions 335 to 353 (AKLESECDSSSHSDADLEK) are enriched in basic and acidic residues. Positions 466–538 (LLDLENMAKL…QIFNELLAFG (73 aa)) constitute a PAS domain.

Belongs to the ERT1/acuK family.

The protein resides in the nucleus. Transcription factor which regulates nonfermentable carbon utilization. Binds specifically to 5'-CGGN(8)CGG-3' and 5'-CGGN(9)CGG-3' sequences in the promoter region. This is Glucose starvation modulator protein 1 (GSM1) from Saccharomyces cerevisiae (strain JAY291) (Baker's yeast).